The following is a 229-amino-acid chain: Endonuclease V (229 aa).

The Mg(2+) site is built by Asp36 and Asp104.

It belongs to the endonuclease V family. The cofactor is Mg(2+).

It localises to the cytoplasm. It catalyses the reaction Endonucleolytic cleavage at apurinic or apyrimidinic sites to products with a 5'-phosphate.. In terms of biological role, DNA repair enzyme involved in the repair of deaminated bases. Selectively cleaves double-stranded DNA at the second phosphodiester bond 3' to a deoxyinosine leaving behind the intact lesion on the nicked DNA. This chain is Endonuclease V, found in Pectobacterium carotovorum subsp. carotovorum (strain PC1).